We begin with the raw amino-acid sequence, 347 residues long: DNA-directed RNA polymerase subunit alpha (347 aa).

An alpha N-terminal domain (alpha-NTD) region spans residues 1 to 226; that stretch reads MLISQRPTLS…ELFGLARELN (226 aa). The interval 243–347 is alpha C-terminal domain (alpha-CTD); the sequence is HIASFALPID…EQDYAETEQL (105 aa).

This sequence belongs to the RNA polymerase alpha chain family. Homodimer. The RNAP catalytic core consists of 2 alpha, 1 beta, 1 beta' and 1 omega subunit. When a sigma factor is associated with the core the holoenzyme is formed, which can initiate transcription.

It carries out the reaction RNA(n) + a ribonucleoside 5'-triphosphate = RNA(n+1) + diphosphate. DNA-dependent RNA polymerase catalyzes the transcription of DNA into RNA using the four ribonucleoside triphosphates as substrates. The chain is DNA-directed RNA polymerase subunit alpha from Mycobacterium bovis (strain ATCC BAA-935 / AF2122/97).